Reading from the N-terminus, the 60-residue chain is UPF0434 protein YcaR (60 aa).

The protein belongs to the UPF0434 family.

The protein is UPF0434 protein YcaR of Escherichia fergusonii (strain ATCC 35469 / DSM 13698 / CCUG 18766 / IAM 14443 / JCM 21226 / LMG 7866 / NBRC 102419 / NCTC 12128 / CDC 0568-73).